Here is a 321-residue protein sequence, read N- to C-terminus: Lipoyl synthase (321 aa).

Residues Cys68, Cys73, Cys79, Cys94, Cys98, Cys101, and Ser308 each coordinate [4Fe-4S] cluster. A Radical SAM core domain is found at 80-297 (FNHGTATFMI…KAEALAMGFT (218 aa)).

This sequence belongs to the radical SAM superfamily. Lipoyl synthase family. [4Fe-4S] cluster serves as cofactor.

Its subcellular location is the cytoplasm. The catalysed reaction is [[Fe-S] cluster scaffold protein carrying a second [4Fe-4S](2+) cluster] + N(6)-octanoyl-L-lysyl-[protein] + 2 oxidized [2Fe-2S]-[ferredoxin] + 2 S-adenosyl-L-methionine + 4 H(+) = [[Fe-S] cluster scaffold protein] + N(6)-[(R)-dihydrolipoyl]-L-lysyl-[protein] + 4 Fe(3+) + 2 hydrogen sulfide + 2 5'-deoxyadenosine + 2 L-methionine + 2 reduced [2Fe-2S]-[ferredoxin]. It participates in protein modification; protein lipoylation via endogenous pathway; protein N(6)-(lipoyl)lysine from octanoyl-[acyl-carrier-protein]: step 2/2. Its function is as follows. Catalyzes the radical-mediated insertion of two sulfur atoms into the C-6 and C-8 positions of the octanoyl moiety bound to the lipoyl domains of lipoate-dependent enzymes, thereby converting the octanoylated domains into lipoylated derivatives. The polypeptide is Lipoyl synthase (Edwardsiella ictaluri (strain 93-146)).